Consider the following 319-residue polypeptide: Ribosomal large subunit pseudouridine synthase C (319 aa).

An S4 RNA-binding domain is found at 20–83 (QRIDNFLRTQ…AEREEEAVSP (64 aa)). Aspartate 144 is a catalytic residue.

Belongs to the pseudouridine synthase RluA family.

It carries out the reaction uridine(955/2504/2580) in 23S rRNA = pseudouridine(955/2504/2580) in 23S rRNA. Responsible for synthesis of pseudouridine from uracil at positions 955, 2504 and 2580 in 23S ribosomal RNA. The polypeptide is Ribosomal large subunit pseudouridine synthase C (Escherichia coli (strain K12)).